A 1163-amino-acid polypeptide reads, in one-letter code: Spike glycoprotein (1163 aa).

An N-terminal signal peptide occupies residues 1 to 18; that stretch reads MLERSLLLATLLSALCSA. The Extracellular segment spans residues 19–1096; sequence NLFGNNSYVY…LKTYIKWPWY (1078 aa). N-linked (GlcNAc...) asparagine; by host glycosylation is found at Asn-23, Asn-51, Asn-74, Asn-102, Asn-139, Asn-145, Asn-164, Asn-179, Asn-213, Asn-238, Asn-248, Asn-265, Asn-272, Asn-277, Asn-307, Asn-426, Asn-448, Asn-514, Asn-531, Asn-543, Asn-580, Asn-592, Asn-670, and Asn-677. The segment at 770 to 875 is heptad repeat 1 (HR1); sequence IPFATQLQAR…QVDRIITGRL (106 aa). A coiled-coil region spans residues 823 to 867; the sequence is QDVVNKQSSILTETMASLNKNFGAISSVLQDIYQQLDSIQADAQV. N-linked (GlcNAc...) asparagine; by host glycosylation is found at Asn-948, Asn-961, Asn-980, Asn-1015, Asn-1039, Asn-1052, and Asn-1075. Positions 1025–1106 are heptad repeat 2 (HR2); sequence NDDFDFDDEL…VWLAIAFLTI (82 aa). The stretch at 1056–1084 forms a coiled coil; that stretch reads PILDIGSEIDRIQGVIQGLNDSLIDLETL. A helical membrane pass occupies residues 1097-1117; sequence VWLAIAFLTIIFILVLCWIFF. Residues 1118–1163 lie on the Cytoplasmic side of the membrane; sequence MTGCCGCCCGCFGIIPLMSKCGKKSSYYTTFDNDVVYEQYRPKKSV. Residues 1160-1163 carry the Di-lysine motif motif; that stretch reads KKSV.

It belongs to the gammacoronaviruses spike protein family. In terms of assembly, homotrimer; each monomer consists of a S1 and a S2 subunit. The resulting peplomers protrude from the virus surface as spikes. Specific enzymatic cleavages in vivo yield mature proteins. The precursor is processed into S1 and S2 by host cell furin or furin-like protease to yield the mature S1 and S2 proteins. The cleavage site between S1 and S2 requires the optimal sequence [KR]-X-[KR]-R. Additionally, a second cleavage leads to the release of a fusion peptide after viral attachment to host cell receptor.

The protein localises to the virion membrane. Its subcellular location is the host endoplasmic reticulum-Golgi intermediate compartment membrane. In terms of biological role, attaches the virion to the host cell membrane by interacting with sialic acids, initiating the infection. Its function is as follows. Mediates fusion of the virion and cellular membranes by acting as a class I viral fusion protein. Under the current model, the protein has at least 3 conformational states: pre-fusion native state, pre-hairpin intermediate state, and post-fusion hairpin state. During viral and target cell membrane fusion, the coiled coil regions (heptad repeats) assume a trimer-of-hairpins structure, positioning the fusion peptide in close proximity to the C-terminal region of the ectodomain. The formation of this structure appears to drive apposition and subsequent fusion of viral and target cell membranes. Functionally, acts as a viral fusion peptide after S2 cleavage occurring upon virus endocytosis. The protein is Spike glycoprotein of Gallus gallus (Chicken).